The chain runs to 273 residues: Cell wall mannoprotein 1 (273 aa).

A signal peptide spans 1 to 17 (MRFSAIFTLGLAGTALA). Residues 173–247 (DVSDSAPSSS…GSASATSPPL (75 aa)) are disordered. A compositionally biased stretch (low complexity) spans 177–247 (SAPSSSAGSS…GSASATSPPL (71 aa)).

It belongs to the cell wall mannoprotein 1 family. In terms of processing, galactomannoprotein, glycosylated.

Its subcellular location is the secreted. It is found in the cell wall. Functionally, constitutive protein of the cell wall. Antigen target of host humoral immune response. The sequence is that of Cell wall mannoprotein 1 from Aspergillus flavus.